We begin with the raw amino-acid sequence, 81 residues long: Serine/arginine-rich splicing factor 6 (81 aa).

Residues 1–48 are compositionally biased toward basic residues; it reads RSRSRSRRSSRSRSRSISKSRSRSRSRSKGRSRSRSKGRKSRSKSKSK. The tract at residues 1–81 is disordered; the sequence is RSRSRSRRSS…SRSRSRSRSP (81 aa). A compositionally biased stretch (basic and acidic residues) spans 62–71; it reads RSKDEYEKSR. The segment covering 72-81 has biased composition (basic residues); sequence SRSRSRSRSP.

Belongs to the splicing factor SR family. Binds SREK1/SFRS12. Interacts with DYRK1A. Extensively phosphorylated on serine residues in the RS domain. Phosphorylated by DYRK1A, probably in the RS domain. Phosphorylation by DYRK1A modulates alternative splice site selection and inhibits the expression of MAPT/Tau exon 10.

The protein localises to the nucleus. It localises to the nucleus speckle. Functionally, plays a role in constitutive splicing and modulates the selection of alternative splice sites. Plays a role in the alternative splicing of MAPT/Tau exon 10. Binds to alternative exons of TNC pre-mRNA and promotes the expression of alternatively spliced TNC. Plays a role in wound healing and in the regulation of keratinocyte differentiation and proliferation via its role in alternative splicing. The chain is Serine/arginine-rich splicing factor 6 (SRSF6) from Oryctolagus cuniculus (Rabbit).